A 538-amino-acid chain; its full sequence is Atos homolog protein B (538 aa).

Polar residues-rich tracts occupy residues 1–12 (MRHVQAETSPSS) and 129–141 (GGSS…SGAR). Disordered stretches follow at residues 1 to 98 (MRHV…EPPT), 129 to 185 (GGSS…QLHT), and 201 to 303 (LVSG…PTDC). Pro residues predominate over residues 227 to 238 (HTPPGPGPPGPC). Phosphoserine occurs at positions 254 and 255. Positions 348–430 (LLGNFEESLL…VPKVGTIQVT (83 aa)) are required for macropage invasion. A transactivation domain 1 (TAD1) region spans residues 436 to 444 (QTVVKMFLV).

The protein belongs to the ATOS family.

Its subcellular location is the nucleus. Functionally, transcription regulator that may syncronize transcriptional and translational programs. The chain is Atos homolog protein B from Bos taurus (Bovine).